Consider the following 951-residue polypeptide: Protein inturned (951 aa).

3 disordered regions span residues 1-32 (MEHS…FSSS), 189-208 (SSRN…NQRL), and 687-765 (TPKR…GGSG). Positions 187-269 (HQSSRNSKRS…PMQLKLTFET (83 aa)) constitute a PDZ domain. Residues 715–726 (PTRSSGGSDSGT) show a composition bias toward low complexity. Basic and acidic residues predominate over residues 743–752 (MARKFGRRES). Residues 754 to 765 (GSGGSDGSGGSG) are compositionally biased toward gly residues.

It belongs to the inturned family. Interacts with fuz and wdpcp; fuz, intu and wdpcp probably form the core CPLANE (ciliogenesis and planar polarity effectors) complex. Expressed in the neural plate during neural tube closure with subsequent strong expression in the ventral neural tube and in facial mesenchyme.

It localises to the cell surface. The protein localises to the cell membrane. Its subcellular location is the cytoplasm. It is found in the cytoskeleton. The protein resides in the cilium basal body. Plays a role in the definition of cell polarity via the planar cell polarity (PCP) cascade. Required for ciliogenesis by controlling the organization of the apical actin cytoskeleton and the positioning of the basal bodies at the apical cell surface, which in turn is essential for the normal orientation of elongating ciliary microtubules. Proposed to function as core component of a functional module called CPLANE (ciliogenesis and planar polarity effectors) involved in recruitment of peripheral IFT-A proteins to basal bodies. Controls the localization of both rhoa and disheveled in multi-ciliated cells. Has an indirect effect on hedgehog signaling. The sequence is that of Protein inturned from Xenopus laevis (African clawed frog).